The primary structure comprises 1969 residues: Protein mono-ADP-ribosyltransferase PARP4 (1969 aa).

One can recognise a BRCT domain in the interval 1–94 (MTLGIFANCI…RLLDVRNYDP (94 aa)). A Nuclear localization signal motif is present at residues 19–25 (PRQQKKK). The disordered stretch occupies residues 92 to 132 (YDPLSPAPAAPPAERSRSEVQSEYLPSDNTPEKENTEVTEV). Residues 235-363 (SEKLQALLLE…ETNLSKPNPP (129 aa)) enclose the PARP alpha-helical domain. One can recognise a PARP catalytic domain in the interval 362 to 566 (PPSLAKYRAL…FCTPGDQIKE (205 aa)). Residues 600–728 (TNIKAGLQDA…KVLIKITYIT (129 aa)) form the VIT domain. Residues 869–1039 (EVIICLDCSS…KQIEAQMTRI (171 aa)) enclose the VWFA domain. S1229 carries the phosphoserine modification. The Nuclear localization signal motif lies at 1230-1242 (DGHGVLQPVSVSS). 5 stretches are compositionally biased toward pro residues: residues 1372 to 1387 (PPHP…PLPL), 1402 to 1417 (HPPP…PPPS), 1425 to 1444 (LPPP…PPIP), 1485 to 1513 (LPPP…PPPS), and 1521 to 1540 (LPPP…PPIP). The interval 1372-1608 (PPHPLGGTHP…AGTQFSLSPI (237 aa)) is disordered. Positions 1443–1541 (IPGGTLIPPS…HIPPPPPIPG (99 aa)) constitute an FH1 domain. The segment covering 1541–1556 (GGTLIPSPSSLFGGTH) has biased composition (low complexity). Positions 1557 to 1585 (LPPPPLLPAGTHIPPPPPITGSTHPPPPS) are enriched in pro residues. The tract at residues 1808 to 1969 (FCDEDQESPV…LHRILYYSQG (162 aa)) is interaction with the major vault protein.

This sequence belongs to the ARTD/PARP family. As to quaternary structure, component of the vault ribonucleoprotein particle, at least composed of MVP, PARP4 and one or more vault RNAs (vRNAs). Interacts with TEP1.

The protein localises to the cytoplasm. The protein resides in the nucleus. The enzyme catalyses L-aspartyl-[protein] + NAD(+) = 4-O-(ADP-D-ribosyl)-L-aspartyl-[protein] + nicotinamide. The catalysed reaction is L-glutamyl-[protein] + NAD(+) = 5-O-(ADP-D-ribosyl)-L-glutamyl-[protein] + nicotinamide. Its function is as follows. Mono-ADP-ribosyltransferase that mediates mono-ADP-ribosylation of target proteins. This chain is Protein mono-ADP-ribosyltransferase PARP4, found in Mus musculus (Mouse).